The primary structure comprises 434 residues: Ribosomal protein uS12 methylthiotransferase RimO (434 aa).

The 119-residue stretch at 4-122 (NRVDVITLGC…LISHLGKSYY (119 aa)) folds into the MTTase N-terminal domain. Residues Cys-13, Cys-51, Cys-85, Cys-146, Cys-150, and Cys-153 each contribute to the [4Fe-4S] cluster site. Residues 132–363 (TTPRHYAYLK…MAVQERISAA (232 aa)) enclose the Radical SAM core domain. The 69-residue stretch at 366-434 (EAKIGSRLRV…PFDLYARIVD (69 aa)) folds into the TRAM domain.

This sequence belongs to the methylthiotransferase family. RimO subfamily. It depends on [4Fe-4S] cluster as a cofactor.

Its subcellular location is the cytoplasm. The catalysed reaction is L-aspartate(89)-[ribosomal protein uS12]-hydrogen + (sulfur carrier)-SH + AH2 + 2 S-adenosyl-L-methionine = 3-methylsulfanyl-L-aspartate(89)-[ribosomal protein uS12]-hydrogen + (sulfur carrier)-H + 5'-deoxyadenosine + L-methionine + A + S-adenosyl-L-homocysteine + 2 H(+). Its function is as follows. Catalyzes the methylthiolation of an aspartic acid residue of ribosomal protein uS12. This chain is Ribosomal protein uS12 methylthiotransferase RimO, found in Porphyromonas gingivalis (strain ATCC 33277 / DSM 20709 / CIP 103683 / JCM 12257 / NCTC 11834 / 2561).